The following is a 436-amino-acid chain: 3-ketoacyl-CoA thiolase (436 aa).

Cys99 acts as the Acyl-thioester intermediate in catalysis. Catalysis depends on proton acceptor residues His392 and Cys422.

This sequence belongs to the thiolase-like superfamily. Thiolase family. Heterotetramer of two alpha chains (FadJ) and two beta chains (FadI).

Its subcellular location is the cytoplasm. The enzyme catalyses an acyl-CoA + acetyl-CoA = a 3-oxoacyl-CoA + CoA. The protein operates within lipid metabolism; fatty acid beta-oxidation. Functionally, catalyzes the final step of fatty acid oxidation in which acetyl-CoA is released and the CoA ester of a fatty acid two carbons shorter is formed. This chain is 3-ketoacyl-CoA thiolase, found in Serratia proteamaculans (strain 568).